A 210-amino-acid polypeptide reads, in one-letter code: BAG family molecular chaperone regulator 2 (210 aa).

N-acetylalanine is present on Ala-2. Residues Ser-20, Ser-31, and Ser-73 each carry the phosphoserine modification. A coiled-coil region spans residues 20–60 (SMADRSSRLLESLDQLELRVEALRDAATAVEQEKEILLEMI). The BAG domain maps to 109 to 189 (SLKHATRIID…NIDNSDKAIK (81 aa)).

Binds to the ATPase domain of HSP/HSC70 chaperones. May interact with NWD1. Interacts with HSPA1A (via NBD), HSPA1B (via NBD) and HSPA8. May interact with DNJC9; the interaction seems to be histone-dependent.

Co-chaperone for HSP70 and HSC70 chaperone proteins. Acts as a nucleotide-exchange factor (NEF) promoting the release of ADP from the HSP70 and HSC70 proteins thereby triggering client/substrate protein release. This Mus musculus (Mouse) protein is BAG family molecular chaperone regulator 2 (Bag2).